Here is a 413-residue protein sequence, read N- to C-terminus: MPQQNYLDELTPGFTPLLAIKEASRCLLCHDAPCSQACPAQTDPGKFIRSIYFRNFKGAAETIRENNALGAVCARVCPTEKLCQRGCTRSGIDKPIDIARLQRFITDFEQQTAMQIYQPGSKTRGKVAIIGAGPAGLQASVTLTHLGYDVTIYEKQPQPGGWLRHGIPAFRLPQSVLDQEIARIVEMGVNIKCNCDVGGSLSLAQLKAEYRAVLMTVGMSCGSDLPLFEQASHVEIAVDFLQRARQADGDISVPRSALIIGGGDVAMDVASTLKILGCPSVTCVAREELAEFPASEKEFTSTQALGVSIIDGFTPVAVSGNKVTFHHVRHSGELTLEAENIILAVGQHARLDNFAEIKAQHNIIDTHNYQTDDPAIFAAGDIVKGDKTVVYAVKTGKEAAQAIHHYLEEACSC.

Glutamate 287 is an NAD(+) binding site.

This sequence belongs to the NADH dehydrogenase family. In terms of assembly, heterotetramer of 2 PreA and 2 PreT subunits.

The enzyme catalyses 5,6-dihydrouracil + NAD(+) = uracil + NADH + H(+). It carries out the reaction 5,6-dihydrothymine + NAD(+) = thymine + NADH + H(+). Involved in pyrimidine base degradation. Catalyzes physiologically the reduction of uracil to 5,6-dihydrouracil (DHU) by using NADH as a specific cosubstrate. It also catalyzes the reverse reaction and the reduction of thymine to 5,6-dihydrothymine (DHT). This Salmonella typhi protein is NAD-dependent dihydropyrimidine dehydrogenase subunit PreT homolog (preT).